The sequence spans 410 residues: TNF receptor-associated factor family protein DDB_G0279745 (410 aa).

The segment at 27-67 (CVICSFPLFDGLQCKRGHGACKSCWEKIIGENGKKECHSCR) adopts an RING-type; degenerate zinc-finger fold. 2 TRAF-type zinc fingers span residues 81-154 (YLEK…SLEQ) and 154-213 (QHQN…DESI). Residues 216–284 (LSNSIVEIQK…SMINKLDDSA (69 aa)) adopt a coiled-coil conformation.

It belongs to the TNF receptor-associated factor family.

It is found in the cytoplasm. Its function is as follows. Probable adapter protein and signal transducer that links members of the tumor necrosis factor receptor family to different signaling pathways by association with the receptor cytoplasmic domain and kinases. This is TNF receptor-associated factor family protein DDB_G0279745 from Dictyostelium discoideum (Social amoeba).